The chain runs to 458 residues: NADH-ubiquinone oxidoreductase chain 4 (458 aa).

The next 12 membrane-spanning stretches (helical) occupy residues 21–43, 58–78, 93–112, 116–138, 145–165, 196–216, 224–244, 257–277, 285–305, 309–329, 341–361, and 379–399; these read ASLW…QWLN, IDQI…LMLL, RTFI…AFSA, TLFY…RWGN, AGIY…VTIL, GLAL…HLWL, PIAG…YGIM, LSYP…SICL, LIAY…MIQT, FSGA…LFCL, ILLL…WWLL, and LTIM…TGLA.

The protein belongs to the complex I subunit 4 family.

It localises to the mitochondrion membrane. It carries out the reaction a ubiquinone + NADH + 5 H(+)(in) = a ubiquinol + NAD(+) + 4 H(+)(out). Its function is as follows. Core subunit of the mitochondrial membrane respiratory chain NADH dehydrogenase (Complex I) that is believed to belong to the minimal assembly required for catalysis. Complex I functions in the transfer of electrons from NADH to the respiratory chain. The immediate electron acceptor for the enzyme is believed to be ubiquinone. This chain is NADH-ubiquinone oxidoreductase chain 4 (MT-ND4), found in Struthio camelus (Common ostrich).